A 310-amino-acid polypeptide reads, in one-letter code: Protein RL1 (310 aa).

Over residues 1-12 (MPATDTNSTHTT) the composition is skewed to polar residues. A disordered region spans residues 1 to 44 (MPATDTNSTHTTPLHPEDQHTLPLHHSTTQPHVQTSDKHADKQH). A compositionally biased stretch (basic and acidic residues) spans 35 to 44 (TSDKHADKQH). Residues 153-159 (LLLARQR) are involved in the interaction with host DDB1. The disordered stretch occupies residues 205 to 252 (ERPSAGEAQARGLLPRIRITPISTSPRPKPPQPTTSTASHPHATARPD). Positions 238 to 248 (TTSTASHPHAT) are enriched in low complexity.

It belongs to the HHV-5 HKLF1 family. In terms of assembly, interacts with host adaptor protein DDB1; this interaction allows RL1 to recruit the cullin4-RING E3 ubiquitin ligase (CRL4) complex and promote SLN11 degradation.

Its function is as follows. Degrades the host antiviral factor SLFN11 via the cullin4-RING E3 ubiquitin ligase (CRL4) complex. The protein is Protein RL1 (RL1) of Human cytomegalovirus (strain Merlin) (HHV-5).